Reading from the N-terminus, the 114-residue chain is Nucleoid-associated protein SGR_3378 (114 aa).

It belongs to the YbaB/EbfC family. As to quaternary structure, homodimer.

It localises to the cytoplasm. Its subcellular location is the nucleoid. In terms of biological role, binds to DNA and alters its conformation. May be involved in regulation of gene expression, nucleoid organization and DNA protection. The sequence is that of Nucleoid-associated protein SGR_3378 from Streptomyces griseus subsp. griseus (strain JCM 4626 / CBS 651.72 / NBRC 13350 / KCC S-0626 / ISP 5235).